A 143-amino-acid polypeptide reads, in one-letter code: Nucleoside diphosphate kinase (143 aa).

6 residues coordinate ATP: Lys-11, Phe-59, Arg-87, Thr-93, Arg-104, and Asn-114. The Pros-phosphohistidine intermediate role is filled by His-117.

This sequence belongs to the NDK family. Homotetramer. It depends on Mg(2+) as a cofactor.

It localises to the cytoplasm. The catalysed reaction is a 2'-deoxyribonucleoside 5'-diphosphate + ATP = a 2'-deoxyribonucleoside 5'-triphosphate + ADP. The enzyme catalyses a ribonucleoside 5'-diphosphate + ATP = a ribonucleoside 5'-triphosphate + ADP. Functionally, major role in the synthesis of nucleoside triphosphates other than ATP. The ATP gamma phosphate is transferred to the NDP beta phosphate via a ping-pong mechanism, using a phosphorylated active-site intermediate. The sequence is that of Nucleoside diphosphate kinase from Thioalkalivibrio sulfidiphilus (strain HL-EbGR7).